Here is a 429-residue protein sequence, read N- to C-terminus: MSVVAVTIFVAAYVLIASDRVNKTMVALTGAAAVVVLPVITSHDIFYSHDTGIDWDVIFLLVGMMIIVGVLRQTGVFEYTAIWAAKRARGSPLRIMILLVLVSALASALLDNVTTVLLIAPVTLLVCDRLNINTTSFLMAEVFASNIGGAATLVGDPPNIIVASRAGLTFNDFMLHLTPLVVIVLIALIAVLPRLFGSITVEADRIADVMALDEGEAIRDRGLLVKCGAVLVLVFAAFVAHPVLHIQPSLVALLGAGMLIVVSGLTRSEYLSSVEWDTLLFFAGLFIMVGALVKTGVVNDLARAATQLTGGNIVATAFLILGVSAPISGIIDNIPYVATMTPLVAELVAVMGGQPSTDTPWWALALGADFGGNLTAIGASANVVMLGIARRAGAPISFWEFTRKGAVVTAVSIALAAIYLWLRYFVLLH.

10 helical membrane-spanning segments follow: residues 26 to 46, 51 to 71, 99 to 119, 135 to 155, 173 to 193, 223 to 243, 278 to 298, 311 to 331, 361 to 381, and 407 to 427; these read VALT…HDIF, TGID…VGVL, LVLV…VLLI, TSFL…TLVG, FMLH…AVLP, LLVK…AHPV, TLLF…TGVV, GNIV…SGII, WWAL…GASA, and VVTA…YFVL.

The protein belongs to the CitM (TC 2.A.11) transporter family.

The protein resides in the cell membrane. This is an uncharacterized protein from Mycobacterium tuberculosis (strain ATCC 25618 / H37Rv).